Reading from the N-terminus, the 60-residue chain is Cytotoxin 4 (60 aa).

4 cysteine pairs are disulfide-bonded: cysteine 3-cysteine 21, cysteine 14-cysteine 38, cysteine 42-cysteine 53, and cysteine 54-cysteine 59.

This sequence belongs to the three-finger toxin family. Short-chain subfamily. Type IA cytotoxin sub-subfamily. Monomer in solution; Homodimer and oligomer in the presence of negatively charged lipids forming a pore with a size ranging between 20 and 30 Angstroms. In terms of tissue distribution, expressed by the venom gland.

The protein localises to the secreted. Its subcellular location is the target cell membrane. In terms of biological role, shows cytolytic activity on many different cells by forming pore in lipid membranes. In vivo, increases heart rate or kills the animal by cardiac arrest. In addition, it binds to heparin with high affinity, interacts with Kv channel-interacting protein 1 (KCNIP1) in a calcium-independent manner, and binds to integrin alpha-V/beta-3 (ITGAV/ITGB3) with moderate affinity. This is Cytotoxin 4 from Naja mossambica (Mozambique spitting cobra).